Reading from the N-terminus, the 204-residue chain is CASP-like protein 1U3 (204 aa).

At 1-19 the chain is on the cytoplasmic side; it reads MCEGEKKKDSSSGALYCVN. A helical transmembrane segment spans residues 20–40; it reads LALRIVVLGLAVAAAALMATA. Over 41–63 the chain is Extracellular; that stretch reads SQCTIFLYYGGPLHTITYKDFGP. The helical transmembrane segment at 64-84 threads the bilayer; that stretch reads FVYLVVASSIGAFMEAIAIFL. Residues 85 to 97 lie on the Cytoplasmic side of the membrane; the sequence is TICKKKDGTPAKV. A helical membrane pass occupies residues 98-118; it reads LLPLLDAAVPVLLYSATAAAF. Residues 119 to 146 lie on the Extracellular side of the membrane; it reads AAGDMSYCAVGKRVGVCTTAAAGNFCNQ. Residues 147 to 167 traverse the membrane as a helical segment; that stretch reads VHIAMYVSLAAGVALLVAEIV. The Cytoplasmic segment spans residues 168-204; sequence KHWPDSGKKKEGGGGGCGSDSDSDKSTPCHHGCHSKH. The segment at 173 to 204 is disordered; that stretch reads SGKKKEGGGGGCGSDSDSDKSTPCHHGCHSKH.

The protein belongs to the Casparian strip membrane proteins (CASP) family. In terms of assembly, homodimer and heterodimers.

It localises to the cell membrane. The sequence is that of CASP-like protein 1U3 from Oryza sativa subsp. japonica (Rice).